The sequence spans 296 residues: Probable endonuclease 4 (296 aa).

Residues His68, His109, Glu144, Asp178, His181, His213, Asp226, His228, and Glu258 each contribute to the Zn(2+) site.

It belongs to the AP endonuclease 2 family. Zn(2+) is required as a cofactor.

It catalyses the reaction Endonucleolytic cleavage to 5'-phosphooligonucleotide end-products.. Endonuclease IV plays a role in DNA repair. It cleaves phosphodiester bonds at apurinic or apyrimidinic (AP) sites, generating a 3'-hydroxyl group and a 5'-terminal sugar phosphate. The polypeptide is Probable endonuclease 4 (Staphylococcus epidermidis (strain ATCC 35984 / DSM 28319 / BCRC 17069 / CCUG 31568 / BM 3577 / RP62A)).